The sequence spans 201 residues: Acyl-homoserine-lactone synthase (201 aa).

This sequence belongs to the autoinducer synthase family.

The catalysed reaction is a fatty acyl-[ACP] + S-adenosyl-L-methionine = an N-acyl-L-homoserine lactone + S-methyl-5'-thioadenosine + holo-[ACP] + H(+). Functionally, required for the synthesis of BHL (N-butanoyl-L-homoserine lactone), and HHL (N-hexanoyl-L-homoserine lactone) autoinducer molecules which bind to RhlR and thus acts in elastase biosynthesis regulation. This chain is Acyl-homoserine-lactone synthase (rhlI), found in Pseudomonas aeruginosa (strain ATCC 15692 / DSM 22644 / CIP 104116 / JCM 14847 / LMG 12228 / 1C / PRS 101 / PAO1).